Reading from the N-terminus, the 31-residue chain is Cytochrome b6-f complex subunit 6 (31 aa).

Residues 4-26 (LTSYFGFLLAALTITSALFIGLS) form a helical membrane-spanning segment.

Belongs to the PetL family. In terms of assembly, the 4 large subunits of the cytochrome b6-f complex are cytochrome b6, subunit IV (17 kDa polypeptide, PetD), cytochrome f and the Rieske protein, while the 4 small subunits are PetG, PetL, PetM and PetN. The complex functions as a dimer.

The protein resides in the plastid. It is found in the chloroplast thylakoid membrane. Its function is as follows. Component of the cytochrome b6-f complex, which mediates electron transfer between photosystem II (PSII) and photosystem I (PSI), cyclic electron flow around PSI, and state transitions. PetL is important for photoautotrophic growth as well as for electron transfer efficiency and stability of the cytochrome b6-f complex. This chain is Cytochrome b6-f complex subunit 6, found in Aethionema grandiflorum (Persian stone-cress).